The following is a 391-amino-acid chain: Chaperone protein DnaJ (391 aa).

A J domain is found at 2–67 (DYYDVLGVSK…QKRESYDRYG (66 aa)). The CR-type zinc finger occupies 148-226 (GVKKELLVSG…CRGQGRIKDK (79 aa)). The Zn(2+) site is built by C161, C164, C178, C181, C200, C203, C214, and C217. CXXCXGXG motif repeat units follow at residues 161–168 (CETCSGSG), 178–185 (CDRCKGSG), 200–207 (CPECGGEG), and 214–221 (CSSCRGQG).

The protein belongs to the DnaJ family. Homodimer. It depends on Zn(2+) as a cofactor.

The protein localises to the cytoplasm. Functionally, participates actively in the response to hyperosmotic and heat shock by preventing the aggregation of stress-denatured proteins and by disaggregating proteins, also in an autonomous, DnaK-independent fashion. Unfolded proteins bind initially to DnaJ; upon interaction with the DnaJ-bound protein, DnaK hydrolyzes its bound ATP, resulting in the formation of a stable complex. GrpE releases ADP from DnaK; ATP binding to DnaK triggers the release of the substrate protein, thus completing the reaction cycle. Several rounds of ATP-dependent interactions between DnaJ, DnaK and GrpE are required for fully efficient folding. Also involved, together with DnaK and GrpE, in the DNA replication of plasmids through activation of initiation proteins. This is Chaperone protein DnaJ from Chlamydia abortus (strain DSM 27085 / S26/3) (Chlamydophila abortus).